Consider the following 119-residue polypeptide: Basic phospholipase A2 taipoxin alpha chain (119 aa).

7 disulfides stabilise this stretch: Cys11-Cys72, Cys27-Cys118, Cys29-Cys45, Cys44-Cys99, Cys51-Cys92, Cys61-Cys85, and Cys79-Cys90. 3 residues coordinate Ca(2+): Tyr28, Gly30, and Gly32. Residue His48 is part of the active site. Residue Asp49 coordinates Ca(2+). Asp93 is an active-site residue.

Belongs to the phospholipase A2 family. Group I subfamily. D49 sub-subfamily. Heterotrimer of alpha, beta, and gamma chains; non-covalently linked. Ca(2+) serves as cofactor. In terms of tissue distribution, expressed by the venom gland.

It is found in the secreted. It catalyses the reaction a 1,2-diacyl-sn-glycero-3-phosphocholine + H2O = a 1-acyl-sn-glycero-3-phosphocholine + a fatty acid + H(+). Functionally, heterotrimer: Snake venom phospholipase A2 (PLA2) heterotrimer that acts as a potent presynaptic neurotoxin by blocking synaptic transmission and synaptic vesicle recycling. May act by binding in a calcium-dependent fashion to neurotonal pentraxin-1 (NPTX1) and neurotonal pentraxin-2 (NPTX2), but not to neuronal pentraxin receptor (NPTXR). Also binds to taipoxin-associated calcium binding protein 49 (RCN2), a protein localized in the lumen of endoplasmic reticulum. Monomer (alpha chain): Snake venom phospholipase A2 (PLA2) alpha chain that possesses the same high enzymatic activity as the heterotrimer. PLA2 catalyzes the calcium-dependent hydrolysis of the 2-acyl groups in 3-sn-phosphoglycerides. In Oxyuranus scutellatus scutellatus (Australian taipan), this protein is Basic phospholipase A2 taipoxin alpha chain.